A 532-amino-acid polypeptide reads, in one-letter code: Flavin-containing monooxygenase 1 (532 aa).

An N-acetylalanine modification is found at Ala-2. The Lumenal portion of the chain corresponds to Ala-2–Pro-510. FAD-binding positions include Gly-9 to Ser-13, Glu-32, Leu-40 to Trp-41, and Asn-61 to Ser-62. NADP(+)-binding positions include Ser-60–Asn-61 and Ser-195–Asp-198. A helical membrane pass occupies residues Phe-511–Phe-531. Residue Leu-532 is a topological domain, cytoplasmic.

The protein belongs to the FMO family. It depends on FAD as a cofactor. Expressed mainly in fetal and adult liver.

The protein resides in the endoplasmic reticulum membrane. The catalysed reaction is hypotaurine + NADPH + O2 + H(+) = taurine + NADP(+) + H2O. It catalyses the reaction hypotaurine + NADH + O2 + H(+) = taurine + NAD(+) + H2O. The enzyme catalyses trimethylamine + NADPH + O2 = trimethylamine N-oxide + NADP(+) + H2O. It carries out the reaction N,N-dimethylaniline + NADPH + O2 + H(+) = N,N-dimethylaniline N-oxide + NADP(+) + H2O. Its function is as follows. Broad spectrum monooxygenase that catalyzes the oxygenation of a wide variety of nitrogen- and sulfur-containing compounds including xenobiotics. Catalyzes the S-oxygenation of hypotaurine to produce taurine, an organic osmolyte involved in cell volume regulation as well as a variety of cytoprotective and developmental processes. In vitro, catalyzes the N-oxygenation of trimethylamine (TMA) to produce trimethylamine N-oxide (TMAO) and could therefore participate to the detoxification of this compound that is generated by the action of gut microbiota from dietary precursors such as choline, choline containing compounds, betaine or L-carnitine. This is Flavin-containing monooxygenase 1 from Homo sapiens (Human).